Here is a 433-residue protein sequence, read N- to C-terminus: Glutamyl-tRNA reductase (433 aa).

Substrate-binding positions include 49–52 (TCNR), Ser114, 119–121 (EPQ), and Gln125. Catalysis depends on Cys50, which acts as the Nucleophile. NADP(+) is bound at residue 201-206 (GAGETI).

This sequence belongs to the glutamyl-tRNA reductase family. In terms of assembly, homodimer.

It carries out the reaction (S)-4-amino-5-oxopentanoate + tRNA(Glu) + NADP(+) = L-glutamyl-tRNA(Glu) + NADPH + H(+). It functions in the pathway porphyrin-containing compound metabolism; protoporphyrin-IX biosynthesis; 5-aminolevulinate from L-glutamyl-tRNA(Glu): step 1/2. Catalyzes the NADPH-dependent reduction of glutamyl-tRNA(Glu) to glutamate 1-semialdehyde (GSA). The sequence is that of Glutamyl-tRNA reductase from Histophilus somni (strain 129Pt) (Haemophilus somnus).